Reading from the N-terminus, the 475-residue chain is 3-isopropylmalate dehydratase large subunit (475 aa).

3 residues coordinate [4Fe-4S] cluster: Cys348, Cys408, and Cys411.

It belongs to the aconitase/IPM isomerase family. LeuC type 1 subfamily. Heterodimer of LeuC and LeuD. It depends on [4Fe-4S] cluster as a cofactor.

The enzyme catalyses (2R,3S)-3-isopropylmalate = (2S)-2-isopropylmalate. The protein operates within amino-acid biosynthesis; L-leucine biosynthesis; L-leucine from 3-methyl-2-oxobutanoate: step 2/4. In terms of biological role, catalyzes the isomerization between 2-isopropylmalate and 3-isopropylmalate, via the formation of 2-isopropylmaleate. The chain is 3-isopropylmalate dehydratase large subunit from Acidobacterium capsulatum (strain ATCC 51196 / DSM 11244 / BCRC 80197 / JCM 7670 / NBRC 15755 / NCIMB 13165 / 161).